The following is a 461-amino-acid chain: tRNA modification GTPase MnmE (461 aa).

3 residues coordinate (6S)-5-formyl-5,6,7,8-tetrahydrofolate: Arg-21, Glu-87, and Lys-126. Residues 222 to 384 (QSTVVLYGEP…LLELLKSKLT (163 aa)) enclose the TrmE-type G domain. K(+) is bound at residue Asn-232. GTP is bound by residues 232–237 (NTGKSS), 251–257 (SDVPGTT), and 276–279 (DTAG). Ser-236 contacts Mg(2+). 3 residues coordinate K(+): Ser-251, Val-253, and Thr-256. A Mg(2+)-binding site is contributed by Thr-257. Position 461 (Lys-461) interacts with (6S)-5-formyl-5,6,7,8-tetrahydrofolate.

Belongs to the TRAFAC class TrmE-Era-EngA-EngB-Septin-like GTPase superfamily. TrmE GTPase family. Homodimer. Heterotetramer of two MnmE and two MnmG subunits. It depends on K(+) as a cofactor.

It is found in the cytoplasm. In terms of biological role, exhibits a very high intrinsic GTPase hydrolysis rate. Involved in the addition of a carboxymethylaminomethyl (cmnm) group at the wobble position (U34) of certain tRNAs, forming tRNA-cmnm(5)s(2)U34. This chain is tRNA modification GTPase MnmE, found in Leptospira biflexa serovar Patoc (strain Patoc 1 / Ames).